A 294-amino-acid chain; its full sequence is Glycine--tRNA ligase alpha subunit (294 aa).

This sequence belongs to the class-II aminoacyl-tRNA synthetase family. As to quaternary structure, tetramer of two alpha and two beta subunits.

It localises to the cytoplasm. The catalysed reaction is tRNA(Gly) + glycine + ATP = glycyl-tRNA(Gly) + AMP + diphosphate. The sequence is that of Glycine--tRNA ligase alpha subunit from Lawsonia intracellularis (strain PHE/MN1-00).